The sequence spans 460 residues: Transcription factor AP-2-beta (460 aa).

Lys-21 is covalently cross-linked (Glycyl lysine isopeptide (Lys-Gly) (interchain with G-Cter in SUMO)). Residues 30 to 139 (HDGVPSHSSR…PQLSGLDPRR (110 aa)) are disordered. Positions 35–51 (SHSSRLSQLGSVSQGPY) are enriched in polar residues. Over residues 121–132 (LLPQPRAALPQL) the composition is skewed to low complexity. Residue Ser-258 is modified to Phosphoserine; by PKA. The tract at residues 435–460 (NTTTNRHTSGEGPGSKTGDKEEKHRK) is disordered. The span at 451 to 460 (TGDKEEKHRK) shows a compositional bias: basic and acidic residues.

This sequence belongs to the AP-2 family. In terms of assembly, binds DNA as a dimer. Can form homodimers or heterodimers with other AP-2 family members. Interacts with CITED4. Interacts with UBE2I. Interacts with KCTD1; this interaction represses transcription activation. Interacts with CITED2 (via C-terminus); the interaction stimulates TFAP2B-transcriptional activity. In terms of processing, sumoylated on Lys-21; which inhibits transcriptional activity.

It localises to the nucleus. Its function is as follows. Sequence-specific DNA-binding protein that interacts with inducible viral and cellular enhancer elements to regulate transcription of selected genes. AP-2 factors bind to the consensus sequence 5'-GCCNNNGGC-3' and activate genes involved in a large spectrum of important biological functions including proper eye, face, body wall, limb and neural tube development. They also suppress a number of genes including MCAM/MUC18, C/EBP alpha and MYC. AP-2-beta appears to be required for normal face and limb development and for proper terminal differentiation and function of renal tubular epithelia. The sequence is that of Transcription factor AP-2-beta (TFAP2B) from Canis lupus familiaris (Dog).